Reading from the N-terminus, the 184-residue chain is Gremlin-1 (184 aa).

A signal peptide spans 1 to 24 (MSRTAYTVGALLLLLGTLLPAAEG). The disordered stretch occupies residues 24–77 (GKKKGSQGAIPPPDKAQHNDSEQTQSPQQPGSRNRGRGQGRGTAMPGEEVLESS). N-linked (GlcNAc...) asparagine glycosylation occurs at asparagine 42. Intrachain disulfides connect cysteine 94–cysteine 144, cysteine 108–cysteine 158, cysteine 118–cysteine 176, and cysteine 122–cysteine 178. A CTCK domain is found at 94–184 (CKTQPLKQTI…QCRCISIDLD (91 aa)).

It belongs to the DAN family. In terms of assembly, homodimer; can also form homooligomers. Interacts with BMP2; can form higher oligomers with BMP2. Interacts with SLIT1 and SLIT2 in a glycosylation-dependent manner. As to expression, highly expressed in small intestine, fetal brain and colon. Expression is restricted to intestinal subepithelial myofibroblasts (ISEMFs) at the crypt base. In subjects with HMPS1, by contrast, GREM1 is expressed, not only in basal ISEMFs, but also at very high levels in epithelial cells (predominantly colonocytes), with expression extending most of the way up the sides of the crypt. Weakly expressed in brain, ovary, prostate, pancreas and skeletal muscle. In brain found in the region localized around the internal capsule in the large subcortical nuclei, including caudate, putamen, substantia nigra, thalamus and subthalamus. Predominantly expressed in normal cells including neurons, astrocytes and fibroblasts.

It is found in the secreted. Its function is as follows. Cytokine that may play an important role during carcinogenesis and metanephric kidney organogenesis, as a BMP antagonist required for early limb outgrowth and patterning in maintaining the FGF4-SHH feedback loop. Down-regulates the BMP4 signaling in a dose-dependent manner. Antagonist of BMP2; inhibits BMP2-mediated differentiation of osteoblasts (in vitro). Acts as inhibitor of monocyte chemotaxis. Can inhibit the growth or viability of normal cells but not transformed cells when is overexpressed. This Homo sapiens (Human) protein is Gremlin-1 (GREM1).